We begin with the raw amino-acid sequence, 529 residues long: E3 ubiquitin-protein ligase arih1 (529 aa).

Disordered regions lie at residues 1-30 (MDSD…EDDL) and 49-68 (GICG…GEEE). The segment covering 51-64 (CGEGGGSALGPGPG) has biased composition (gly residues). Residues 77–125 (TAEQILQHMVECIREVNEVIQNPATITRILLSHFNWDKEKLMERYFDGN) are UBA-like. Positions 154–365 (QDMPCQICYL…SAWYNCNRYN (212 aa)) are TRIAD supradomain. Zn(2+)-binding residues include C158, C161, C175, H177, C180, C183, C203, C208, C248, C253, C269, C271, C276, C279, H284, C289, C316, and C319. The segment at 158-208 (CQICYLNYPNSYFTGLECGHKFCMQCWSEYLTTKIIEEGMGQTISCPAHGC) adopts an RING-type 1 zinc-finger fold. The IBR-type zinc-finger motif lies at 228–289 (LKYQHLITNS…GENWHDPVKC (62 aa)). The segment at 316–347 (CPKCHVTIEKDGGCNHMVCRNQNCKAEFCWVC) adopts an RING-type 2; atypical zinc-finger fold. The active site involves C329. Residues C334, C339, C344, C347, H354, and C361 each coordinate Zn(2+). Residues 380–529 (RAALQRYLFY…EKDLWEYIED (150 aa)) form an ariadne domain region.

The protein belongs to the RBR family. Ariadne subfamily. As to quaternary structure, interacts (via the first RING-type zinc finger) with ube2l3. Associates with cullin-RING ubiquitin ligase (CRL) complexes containing neddylated cullin.

Its subcellular location is the cytoplasm. The protein localises to the nucleus. It carries out the reaction [E2 ubiquitin-conjugating enzyme]-S-ubiquitinyl-L-cysteine + [acceptor protein]-L-lysine = [E2 ubiquitin-conjugating enzyme]-L-cysteine + [acceptor protein]-N(6)-ubiquitinyl-L-lysine.. The protein operates within protein modification; protein ubiquitination. Autoinhibited by the ariadne domain, which masks the second RING-type zinc finger that contains the active site and inhibits the E3 activity. Inhibition is relieved upon binding to neddylated cullin-RING ubiquitin ligase complexes, which activate the E3 ligase activity of ARIH1. E3 ubiquitin-protein ligase, which catalyzes ubiquitination of target proteins together with ubiquitin-conjugating enzyme E2 ube2l3. Acts as an atypical E3 ubiquitin-protein ligase by working together with cullin-RING ubiquitin ligase (CRL) complexes and initiating ubiquitination of CRL substrates: associates with CRL complexes and specifically mediates addition of the first ubiquitin on CRLs targets. The initial ubiquitin is then elongated. E3 ubiquitin-protein ligase activity is activated upon binding to neddylated cullin-RING ubiquitin ligase complexes. The sequence is that of E3 ubiquitin-protein ligase arih1 (arih1) from Xenopus tropicalis (Western clawed frog).